A 296-amino-acid polypeptide reads, in one-letter code: GTPase Era (296 aa).

The region spanning 3 to 170 is the Era-type G domain; sequence KSGFVTIVGR…KELMFKYIPE (168 aa). Residues 11–18 form a G1 region; that stretch reads GRPNVGKS. 11–18 is a binding site for GTP; it reads GRPNVGKS. The interval 37-41 is G2; it reads QTTRN. The interval 58–61 is G3; sequence DTPG. Residues 58 to 62 and 120 to 123 each bind GTP; these read DTPGI and NKID. The interval 120 to 123 is G4; the sequence is NKID. Residues 149–151 are G5; it reads ISA. In terms of domain architecture, KH type-2 spans 201 to 278; the sequence is LSEEVPHGIA…YIRLWVKVKE (78 aa).

Belongs to the TRAFAC class TrmE-Era-EngA-EngB-Septin-like GTPase superfamily. Era GTPase family. Monomer.

Its subcellular location is the cytoplasm. It is found in the cell membrane. In terms of biological role, an essential GTPase that binds both GDP and GTP, with rapid nucleotide exchange. Plays a role in 16S rRNA processing and 30S ribosomal subunit biogenesis and possibly also in cell cycle regulation and energy metabolism. In Clostridium botulinum (strain 657 / Type Ba4), this protein is GTPase Era.